Consider the following 174-residue polypeptide: Large ribosomal subunit protein uL10 (174 aa).

The protein belongs to the universal ribosomal protein uL10 family. In terms of assembly, part of the ribosomal stalk of the 50S ribosomal subunit. The N-terminus interacts with L11 and the large rRNA to form the base of the stalk. The C-terminus forms an elongated spine to which L12 dimers bind in a sequential fashion forming a multimeric L10(L12)X complex.

In terms of biological role, forms part of the ribosomal stalk, playing a central role in the interaction of the ribosome with GTP-bound translation factors. The polypeptide is Large ribosomal subunit protein uL10 (Anaeromyxobacter sp. (strain Fw109-5)).